Consider the following 346-residue polypeptide: Probable RNA methyltransferase Pmen_2155 (346 aa).

Glu91 functions as the Proton acceptor in the catalytic mechanism. In terms of domain architecture, Radical SAM core spans 94-320 (LLPRDGLCIS…TKVRNSAGQD (227 aa)). A disulfide bond links Cys101 and Cys325. Residues Cys108, Cys112, and Cys115 each coordinate [4Fe-4S] cluster. Residues 153-154 (GE), Ser183, 206-208 (SLH), and Asn282 contribute to the S-adenosyl-L-methionine site. Cys325 serves as the catalytic S-methylcysteine intermediate.

This sequence belongs to the radical SAM superfamily. RlmN family. [4Fe-4S] cluster serves as cofactor.

The protein resides in the cytoplasm. The polypeptide is Probable RNA methyltransferase Pmen_2155 (Ectopseudomonas mendocina (strain ymp) (Pseudomonas mendocina)).